The chain runs to 150 residues: 3-dehydroquinate dehydratase (150 aa).

The active-site Proton acceptor is the Y26. Substrate contacts are provided by N77, H83, and D90. The Proton donor role is filled by H103. Substrate-binding positions include 104–105 and R114; that span reads LS.

It belongs to the type-II 3-dehydroquinase family. As to quaternary structure, homododecamer.

It catalyses the reaction 3-dehydroquinate = 3-dehydroshikimate + H2O. The protein operates within metabolic intermediate biosynthesis; chorismate biosynthesis; chorismate from D-erythrose 4-phosphate and phosphoenolpyruvate: step 3/7. Catalyzes a trans-dehydration via an enolate intermediate. The chain is 3-dehydroquinate dehydratase from Erwinia tasmaniensis (strain DSM 17950 / CFBP 7177 / CIP 109463 / NCPPB 4357 / Et1/99).